Here is a 289-residue protein sequence, read N- to C-terminus: Shikimate dehydrogenase (NADP(+)) (289 aa).

Residues 20-22 (SIS) and S67 contribute to the shikimate site. The active-site Proton acceptor is the K71. Shikimate contacts are provided by N92 and D107. NADP(+) is bound by residues 132-136 (GGGGA) and V230. Position 232 (Y232) interacts with shikimate. G253 is a binding site for NADP(+).

The protein belongs to the shikimate dehydrogenase family. Homodimer.

The catalysed reaction is shikimate + NADP(+) = 3-dehydroshikimate + NADPH + H(+). It functions in the pathway metabolic intermediate biosynthesis; chorismate biosynthesis; chorismate from D-erythrose 4-phosphate and phosphoenolpyruvate: step 4/7. Involved in the biosynthesis of the chorismate, which leads to the biosynthesis of aromatic amino acids. Catalyzes the reversible NADPH linked reduction of 3-dehydroshikimate (DHSA) to yield shikimate (SA). In Streptococcus mutans serotype c (strain ATCC 700610 / UA159), this protein is Shikimate dehydrogenase (NADP(+)).